Consider the following 387-residue polypeptide: Ferrochelatase (387 aa).

Positions 196 and 277 each coordinate Fe cation.

It belongs to the ferrochelatase family.

The protein localises to the cytoplasm. The catalysed reaction is heme b + 2 H(+) = protoporphyrin IX + Fe(2+). It participates in porphyrin-containing compound metabolism; protoheme biosynthesis; protoheme from protoporphyrin-IX: step 1/1. Catalyzes the ferrous insertion into protoporphyrin IX. The sequence is that of Ferrochelatase from Gloeothece citriformis (strain PCC 7424) (Cyanothece sp. (strain PCC 7424)).